Here is a 511-residue protein sequence, read N- to C-terminus: AMP phosphorylase (511 aa).

Residues glycine 168, 194 to 199 (SRAITS), and threonine 203 contribute to the AMP site. Aspartate 256 serves as the catalytic Proton donor. Positions 262 and 286 each coordinate AMP.

Belongs to the thymidine/pyrimidine-nucleoside phosphorylase family. Type 2 subfamily.

The enzyme catalyses AMP + phosphate = alpha-D-ribose 1,5-bisphosphate + adenine. It catalyses the reaction CMP + phosphate = cytosine + alpha-D-ribose 1,5-bisphosphate. It carries out the reaction UMP + phosphate = alpha-D-ribose 1,5-bisphosphate + uracil. In terms of biological role, catalyzes the conversion of AMP and phosphate to adenine and ribose 1,5-bisphosphate (R15P). Exhibits phosphorylase activity toward CMP and UMP in addition to AMP. Functions in an archaeal AMP degradation pathway, together with R15P isomerase and RubisCO. The protein is AMP phosphorylase of Thermofilum pendens (strain DSM 2475 / Hrk 5).